A 430-amino-acid polypeptide reads, in one-letter code: Resistance to inhibitors of cholinesterase protein 19 (430 aa).

The region spanning 56–260 (ASDNELDTCL…TSRAFETLAE (205 aa)) is the AH domain. Residues 279 to 342 (GTKPERERKS…SPLIEDVDDE (64 aa)) form a disordered region. Positions 281–294 (KPERERKSEKEESA) are enriched in basic and acidic residues.

Interacts with the GTPase activator protein tbc-8; the interaction is direct and may be required for the activation of rab-2 and dense vesicle maturation in cholinergic motoneurons. Interacts with rund-1. In terms of tissue distribution, expressed in all neurons. Highly expressed in m2 pharyngeal neurons and some pharyngeal interneurons. Also expressed in the excretory canal and the gland cells located just below the nerve ring in the head.

The protein localises to the cytoplasm. The protein resides in the cytoplasmic vesicle membrane. In terms of biological role, may be involved in neurotransmitter secretion. In association with the GTPase activator protein tbc-8 activates rab-2 during dense core vesicle maturation in cholinergic motoneurons. This Caenorhabditis elegans protein is Resistance to inhibitors of cholinesterase protein 19.